A 633-amino-acid chain; its full sequence is Threonine--tRNA ligase (633 aa).

One can recognise a TGS domain in the interval 1–59 (MIKVTFLAEQKVKEYSGRVTGFDILQPDALREAIAFKVNGELYDLSREIESDTEIEVIQ). Residues 240–532 (DHRKIAKDMD…LIENYAGKFP (293 aa)) form a catalytic region. Zn(2+) contacts are provided by Cys332, His383, and His509.

This sequence belongs to the class-II aminoacyl-tRNA synthetase family. In terms of assembly, homodimer. It depends on Zn(2+) as a cofactor.

It localises to the cytoplasm. The catalysed reaction is tRNA(Thr) + L-threonine + ATP = L-threonyl-tRNA(Thr) + AMP + diphosphate + H(+). Catalyzes the attachment of threonine to tRNA(Thr) in a two-step reaction: L-threonine is first activated by ATP to form Thr-AMP and then transferred to the acceptor end of tRNA(Thr). Also edits incorrectly charged L-seryl-tRNA(Thr). The chain is Threonine--tRNA ligase from Wolbachia pipientis subsp. Culex pipiens (strain wPip).